Reading from the N-terminus, the 377-residue chain is Alanine racemase (377 aa).

Lys37 serves as the catalytic Proton acceptor; specific for D-alanine. An N6-(pyridoxal phosphate)lysine modification is found at Lys37. Residue Arg135 participates in substrate binding. Tyr271 (proton acceptor; specific for L-alanine) is an active-site residue. Met319 is a substrate binding site.

Belongs to the alanine racemase family. It depends on pyridoxal 5'-phosphate as a cofactor.

The enzyme catalyses L-alanine = D-alanine. Its pathway is amino-acid biosynthesis; D-alanine biosynthesis; D-alanine from L-alanine: step 1/1. Catalyzes the interconversion of L-alanine and D-alanine. May also act on other amino acids. In Helicobacter acinonychis (strain Sheeba), this protein is Alanine racemase (alr).